Reading from the N-terminus, the 101-residue chain is Apolipoprotein C-II (101 aa).

The signal sequence occupies residues 1-22 (MGTRFLLALCLVLLVLGFEVQG). The lipid binding stretch occupies residues 66-74 (AVDEKLRDL). A lipoprotein lipase cofactor region spans residues 78–101 (STAAMSTYTGIFTDQVLSVLKGEE).

The protein belongs to the apolipoprotein C2 family. In terms of processing, proapolipoprotein C-II is synthesized as a sialic acid containing glycoprotein which is subsequently desialylated prior to its proteolytic processing. Proapolipoprotein C-II, the major form found in plasma undergoes proteolytic cleavage of its N-terminal hexapeptide to generate apolipoprotein C-II, which occurs as the minor form in plasma.

The protein resides in the secreted. Functionally, component of chylomicrons, very low-density lipoproteins (VLDL), low-density lipoproteins (LDL), and high-density lipoproteins (HDL) in plasma. Plays an important role in lipoprotein metabolism as an activator of lipoprotein lipase. Both proapolipoprotein C-II and apolipoprotein C-II can activate lipoprotein lipase. The chain is Apolipoprotein C-II (APOC2) from Colobus guereza (Mantled guereza).